The sequence spans 254 residues: DNA repair protein RecO (254 aa).

It belongs to the RecO family.

In terms of biological role, involved in DNA repair and RecF pathway recombination. This chain is DNA repair protein RecO, found in Anaeromyxobacter dehalogenans (strain 2CP-1 / ATCC BAA-258).